The chain runs to 264 residues: Putative [LysW]-aminoadipate/[LysW]-glutamate kinase (264 aa).

Residues 34–35 (GG), Arg61, and Asn169 each bind substrate.

The protein belongs to the acetylglutamate kinase family. LysZ subfamily.

The protein localises to the cytoplasm. The enzyme catalyses [amino-group carrier protein]-C-terminal-N-(1,4-dicarboxybutan-1-yl)-L-glutamine + ATP = [amino-group carrier protein]-C-terminal-N-(1-carboxy-5-phosphooxy-5-oxopentan-1-yl)-L-glutamine + ADP. It catalyses the reaction [amino-group carrier protein]-C-terminal-gamma-(L-glutamyl)-L-glutamate + ATP = [amino-group carrier protein]-C-terminal-gamma-(5-phospho-L-glutamyl)-L-glutamate + ADP. It functions in the pathway amino-acid biosynthesis; L-lysine biosynthesis via AAA pathway; L-lysine from L-alpha-aminoadipate (Thermus route): step 2/5. The protein operates within amino-acid biosynthesis; L-arginine biosynthesis. Its function is as follows. Involved in both the arginine and lysine biosynthetic pathways. Phosphorylates the LysW-bound precursors glutamate (for arginine biosynthesis), respectively alpha-aminoadipate (for lysine biosynthesis). This chain is Putative [LysW]-aminoadipate/[LysW]-glutamate kinase, found in Ignicoccus hospitalis (strain KIN4/I / DSM 18386 / JCM 14125).